A 371-amino-acid chain; its full sequence is Anhydro-N-acetylmuramic acid kinase (371 aa).

12 to 20 (GTVLDGNID) is an ATP binding site.

It belongs to the anhydro-N-acetylmuramic acid kinase family.

It carries out the reaction 1,6-anhydro-N-acetyl-beta-muramate + ATP + H2O = N-acetyl-D-muramate 6-phosphate + ADP + H(+). It participates in amino-sugar metabolism; 1,6-anhydro-N-acetylmuramate degradation. Its pathway is cell wall biogenesis; peptidoglycan recycling. Functionally, catalyzes the specific phosphorylation of 1,6-anhydro-N-acetylmuramic acid (anhMurNAc) with the simultaneous cleavage of the 1,6-anhydro ring, generating MurNAc-6-P. Is required for the utilization of anhMurNAc either imported from the medium or derived from its own cell wall murein, and thus plays a role in cell wall recycling. The polypeptide is Anhydro-N-acetylmuramic acid kinase (Mesorhizobium japonicum (strain LMG 29417 / CECT 9101 / MAFF 303099) (Mesorhizobium loti (strain MAFF 303099))).